The primary structure comprises 307 residues: Mitogen-activated protein kinase kinase 7 (307 aa).

Residues 45–303 (VEKLHVLGRG…ASQLLGHPFL (259 aa)) enclose the Protein kinase domain. ATP is bound by residues 51-59 (LGRGSSGIV) and Lys74. Asp165 acts as the Proton acceptor in catalysis. Phosphoserine occurs at positions 193 and 199. Thr203 is modified (phosphothreonine).

The protein belongs to the protein kinase superfamily. STE Ser/Thr protein kinase family. MAP kinase kinase subfamily. In terms of assembly, interacts with MPK15. Phosphorylation at Ser-193 and Ser-199 by MAP kinase kinase kinases positively regulates kinase activity. Expressed in all tissues, with a relatively higher level in leaves and lower level in roots and flowers.

The catalysed reaction is L-seryl-[protein] + ATP = O-phospho-L-seryl-[protein] + ADP + H(+). It carries out the reaction L-threonyl-[protein] + ATP = O-phospho-L-threonyl-[protein] + ADP + H(+). The enzyme catalyses L-tyrosyl-[protein] + ATP = O-phospho-L-tyrosyl-[protein] + ADP + H(+). In terms of biological role, may function as a negative regulator of polar auxin transport. Positively regulates plant basal and systemic acquired resistance (SAR). Activates MPK3 and MPK6 in vitro. In Arabidopsis thaliana (Mouse-ear cress), this protein is Mitogen-activated protein kinase kinase 7 (MKK7).